Here is a 168-residue protein sequence, read N- to C-terminus: Photosystem I assembly protein Ycf3 (168 aa).

TPR repeat units follow at residues 35 to 68 (AFTY…EIDP), 72 to 105 (SYIL…NPFL), and 120 to 153 (GEQA…TPGN).

The protein belongs to the Ycf3 family.

It localises to the plastid. The protein localises to the chloroplast thylakoid membrane. In terms of biological role, essential for the assembly of the photosystem I (PSI) complex. May act as a chaperone-like factor to guide the assembly of the PSI subunits. This chain is Photosystem I assembly protein Ycf3, found in Lactuca sativa (Garden lettuce).